A 450-amino-acid polypeptide reads, in one-letter code: Bifunctional protein GlmU (450 aa).

Residues 1–229 form a pyrophosphorylase region; that stretch reads MRRHAIILAA…VEEIMGVNDR (229 aa). Residues 8–11, Lys-22, Gln-72, and 77–78 contribute to the UDP-N-acetyl-alpha-D-glucosamine site; these read LAAG and GT. Asp-102 contacts Mg(2+). 3 residues coordinate UDP-N-acetyl-alpha-D-glucosamine: Gly-139, Glu-154, and Asn-227. Asn-227 is a binding site for Mg(2+). The tract at residues 230–250 is linker; the sequence is VMLSQAEKAMQRRTNHYHMLN. The N-acetyltransferase stretch occupies residues 251–450; sequence GVTIIDPDST…RQTTKEGYRK (200 aa). Residues Arg-332 and Lys-350 each contribute to the UDP-N-acetyl-alpha-D-glucosamine site. The Proton acceptor role is filled by His-362. UDP-N-acetyl-alpha-D-glucosamine contacts are provided by Tyr-365 and Asn-376. Residues 385–386, Ala-422, and Arg-439 each bind acetyl-CoA; that span reads NY.

This sequence in the N-terminal section; belongs to the N-acetylglucosamine-1-phosphate uridyltransferase family. The protein in the C-terminal section; belongs to the transferase hexapeptide repeat family. In terms of assembly, homotrimer. Mg(2+) is required as a cofactor.

The protein localises to the cytoplasm. It carries out the reaction alpha-D-glucosamine 1-phosphate + acetyl-CoA = N-acetyl-alpha-D-glucosamine 1-phosphate + CoA + H(+). The catalysed reaction is N-acetyl-alpha-D-glucosamine 1-phosphate + UTP + H(+) = UDP-N-acetyl-alpha-D-glucosamine + diphosphate. It participates in nucleotide-sugar biosynthesis; UDP-N-acetyl-alpha-D-glucosamine biosynthesis; N-acetyl-alpha-D-glucosamine 1-phosphate from alpha-D-glucosamine 6-phosphate (route II): step 2/2. The protein operates within nucleotide-sugar biosynthesis; UDP-N-acetyl-alpha-D-glucosamine biosynthesis; UDP-N-acetyl-alpha-D-glucosamine from N-acetyl-alpha-D-glucosamine 1-phosphate: step 1/1. Its pathway is bacterial outer membrane biogenesis; LPS lipid A biosynthesis. In terms of biological role, catalyzes the last two sequential reactions in the de novo biosynthetic pathway for UDP-N-acetylglucosamine (UDP-GlcNAc). The C-terminal domain catalyzes the transfer of acetyl group from acetyl coenzyme A to glucosamine-1-phosphate (GlcN-1-P) to produce N-acetylglucosamine-1-phosphate (GlcNAc-1-P), which is converted into UDP-GlcNAc by the transfer of uridine 5-monophosphate (from uridine 5-triphosphate), a reaction catalyzed by the N-terminal domain. The chain is Bifunctional protein GlmU from Staphylococcus aureus (strain USA300).